The sequence spans 177 residues: Putative HVA22-like protein g (177 aa).

The interval 145 to 165 (QSTPKSKAEEKKETTIPKLDD) is disordered. Positions 150–165 (SKAEEKKETTIPKLDD) are enriched in basic and acidic residues.

It belongs to the DP1 family.

This chain is Putative HVA22-like protein g (HVA22G), found in Arabidopsis thaliana (Mouse-ear cress).